The following is a 226-amino-acid chain: Pathogenesis-related protein R minor form (226 aa).

Residues 1 to 25 (MNFLKSFPFYAFLCFGQYFVAVTHA) form the signal peptide. Intrachain disulfides connect Cys34–Cys225, Cys75–Cys85, Cys90–Cys96, Cys140–Cys214, Cys145–Cys197, Cys153–Cys163, Cys167–Cys176, and Cys177–Cys184.

This sequence belongs to the thaumatin family.

The protein localises to the vacuole. This Nicotiana tabacum (Common tobacco) protein is Pathogenesis-related protein R minor form.